Consider the following 507-residue polypeptide: Histidine ammonia-lyase (507 aa).

A cross-link (5-imidazolinone (Ala-Gly)) is located at residues Ala-141 to Gly-143. The residue at position 142 (Ser-142) is a 2,3-didehydroalanine (Ser).

It belongs to the PAL/histidase family. Contains an active site 4-methylidene-imidazol-5-one (MIO), which is formed autocatalytically by cyclization and dehydration of residues Ala-Ser-Gly.

Its subcellular location is the cytoplasm. It carries out the reaction L-histidine = trans-urocanate + NH4(+). It participates in amino-acid degradation; L-histidine degradation into L-glutamate; N-formimidoyl-L-glutamate from L-histidine: step 1/3. This chain is Histidine ammonia-lyase, found in Cereibacter sphaeroides (strain ATCC 17029 / ATH 2.4.9) (Rhodobacter sphaeroides).